The sequence spans 88 residues: Cytochrome c oxidase subunit 6B2 (88 aa).

The tract at residues 1 to 21 is disordered; the sequence is MLGVQAQMPAPGQWTTPPFDP. In terms of domain architecture, CHCH spans 29–75; it reads TRNCYQNFLDYHRCVKTMDRRGKNTQACDYYFRVFHSLCPVSWVQRW. The Cx9C motif motif lies at 32-42; sequence CYQNFLDYHRC. 2 disulfide bridges follow: C32–C67 and C42–C56. The short motif at 56–67 is the Cx10C motif element; the sequence is CDYYFRVFHSLC.

This sequence belongs to the cytochrome c oxidase subunit 6B family. Component of the cytochrome c oxidase (complex IV, CIV), a multisubunit enzyme composed of 14 subunits. The complex is composed of a catalytic core of 3 subunits MT-CO1, MT-CO2 and MT-CO3, encoded in the mitochondrial DNA, and 11 supernumerary subunits COX4I, COX5A, COX5B, COX6A, COX6B, COX6C, COX7A, COX7B, COX7C, COX8 and NDUFA4, which are encoded in the nuclear genome. The complex exists as a monomer or a dimer and forms supercomplexes (SCs) in the inner mitochondrial membrane with NADH-ubiquinone oxidoreductase (complex I, CI) and ubiquinol-cytochrome c oxidoreductase (cytochrome b-c1 complex, complex III, CIII), resulting in different assemblies (supercomplex SCI(1)III(2)IV(1) and megacomplex MCI(2)III(2)IV(2)). Testis specific.

It localises to the mitochondrion inner membrane. Its pathway is energy metabolism; oxidative phosphorylation. In terms of biological role, component of the cytochrome c oxidase, the last enzyme in the mitochondrial electron transport chain which drives oxidative phosphorylation. The respiratory chain contains 3 multisubunit complexes succinate dehydrogenase (complex II, CII), ubiquinol-cytochrome c oxidoreductase (cytochrome b-c1 complex, complex III, CIII) and cytochrome c oxidase (complex IV, CIV), that cooperate to transfer electrons derived from NADH and succinate to molecular oxygen, creating an electrochemical gradient over the inner membrane that drives transmembrane transport and the ATP synthase. Cytochrome c oxidase is the component of the respiratory chain that catalyzes the reduction of oxygen to water. Electrons originating from reduced cytochrome c in the intermembrane space (IMS) are transferred via the dinuclear copper A center (CU(A)) of subunit 2 and heme A of subunit 1 to the active site in subunit 1, a binuclear center (BNC) formed by heme A3 and copper B (CU(B)). The BNC reduces molecular oxygen to 2 water molecules using 4 electrons from cytochrome c in the IMS and 4 protons from the mitochondrial matrix. This Rattus norvegicus (Rat) protein is Cytochrome c oxidase subunit 6B2 (Cox6b2).